Here is a 198-residue protein sequence, read N- to C-terminus: Probable molybdenum cofactor guanylyltransferase (198 aa).

GTP contacts are provided by residues 9–11 (LAG), Lys-22, Asp-66, and Asp-95. Asp-95 lines the Mg(2+) pocket.

It belongs to the MobA family. It depends on Mg(2+) as a cofactor.

It is found in the cytoplasm. The catalysed reaction is Mo-molybdopterin + GTP + H(+) = Mo-molybdopterin guanine dinucleotide + diphosphate. In terms of biological role, transfers a GMP moiety from GTP to Mo-molybdopterin (Mo-MPT) cofactor (Moco or molybdenum cofactor) to form Mo-molybdopterin guanine dinucleotide (Mo-MGD) cofactor. The polypeptide is Probable molybdenum cofactor guanylyltransferase (Clostridium perfringens (strain 13 / Type A)).